The sequence spans 414 residues: Particulate methane monooxygenase alpha subunit (414 aa).

The signal sequence occupies residues 1–32 (MKTIKDRIAKWSAIGLLSAVAATAFYAPSASA). Residues His33, His48, His72, His137, and His139 each coordinate Cu cation. Residues 33-172 (HGEKSQAAFM…MSEFRNPVTT (140 aa)) are cupredoxin domain used to construct soluble pmoB (spmoB). 2 helical membrane-spanning segments follow: residues 186–206 (GNTY…IGYW) and 235–255 (VAMG…SSAN). The tract at residues 265 to 414 (QAGTMRGMKP…IDAPLIPSFM (150 aa)) is cupredoxin domain used to construct soluble pmoB (spmoB).

As to quaternary structure, m.capsulatus has two forms of methane monooxygenase, a soluble (sMMO) and a membrane-bound (particulate) type (pMMO). The particulate type is a nonamer composed of three alpha:beta:gamma heterotrimeric protomers assembled into a cylindrical structure; the beta and gamma subunits comprise the bulk of the membrane-spanning regions and the soluble regions are derived primarily from alpha subunits which form two antiparallel beta-barrel-like structures each. This assembly, also called pMMO hydroxylase (pMMO-H), is proposed to associate with methanol dehydrogenase (MDH), also designated as pMMO-R, to form the pMMO-C complex which seems to have greater methane monooxygenase activity. The cofactor is Cu(2+).

It localises to the membrane. The catalysed reaction is methane + a quinol + O2 = methanol + a quinone + H2O. Functionally, methane monooxygenase is responsible for the initial oxygenation of methane to methanol in methanotrophs. At least in vitro, specific quinols can replace NADH as reductants. The sequence is that of Particulate methane monooxygenase alpha subunit (pmoB1) from Methylococcus capsulatus (strain ATCC 33009 / NCIMB 11132 / Bath).